Consider the following 433-residue polypeptide: Dihydroorotase (433 aa).

Residues His63 and His65 each contribute to the Zn(2+) site. Substrate is bound by residues 65 to 67 and Asn97; that span reads HLR. Zn(2+) is bound by residues Asp155, His182, and His235. Asn283 contributes to the substrate binding site. Asp310 provides a ligand contact to Zn(2+). The active site involves Asp310. His314 is a substrate binding site.

It belongs to the metallo-dependent hydrolases superfamily. DHOase family. Class I DHOase subfamily. Zn(2+) is required as a cofactor.

It catalyses the reaction (S)-dihydroorotate + H2O = N-carbamoyl-L-aspartate + H(+). It participates in pyrimidine metabolism; UMP biosynthesis via de novo pathway; (S)-dihydroorotate from bicarbonate: step 3/3. Functionally, catalyzes the reversible cyclization of carbamoyl aspartate to dihydroorotate. This is Dihydroorotase from Anaeromyxobacter sp. (strain K).